A 408-amino-acid polypeptide reads, in one-letter code: Arylacetamide deacetylase-like 3 (408 aa).

A run of 3 helical transmembrane segments spans residues 2–22, 46–66, and 109–129; these read VVLA…GSLL, ILSC…KLGL, and SSIP…IGSL. The Involved in the stabilization of the negatively charged intermediate by the formation of the oxyanion hole signature appears at 120 to 122; it reads HGG. Ser194 is an active-site residue. The N-linked (GlcNAc...) asparagine glycan is linked to Asn321. Residues Asp348 and His378 contribute to the active site.

It belongs to the 'GDXG' lipolytic enzyme family.

The protein resides in the membrane. This Mus musculus (Mouse) protein is Arylacetamide deacetylase-like 3 (Aadacl3).